Here is a 2111-residue protein sequence, read N- to C-terminus: Glutamate synthase [NADH] (2111 aa).

Cys69 serves as the catalytic Nucleophile. The region spanning 69–469 (CGVGFTCHIK…PGRMLLVDTK (401 aa)) is the Glutamine amidotransferase type-2 domain. The tract at residues 969–990 (GGKSNTGEGGEDPARSQRLANG) is disordered. Position 1139-1191 (1139-1191 (VAETHQTLVLNDLRGRVVIQTDGQIRTGRDVAIACLLGAEEWGFATTPLIALG)) interacts with FMN. Residues Cys1192, Cys1198, and Cys1203 each coordinate [3Fe-4S] cluster.

It belongs to the glutamate synthase family. Homotrimer. [3Fe-4S] cluster serves as cofactor. Requires FAD as cofactor. The cofactor is FMN.

Its subcellular location is the cytoplasm. The enzyme catalyses 2 L-glutamate + NAD(+) = L-glutamine + 2-oxoglutarate + NADH + H(+). The protein operates within amino-acid biosynthesis; L-glutamate biosynthesis via GLT pathway; L-glutamate from 2-oxoglutarate and L-glutamine (NAD(+) route): step 1/1. Its pathway is energy metabolism; nitrogen metabolism. Its activity is regulated as follows. In the presence of 10 mM allantoin, the activity is reduced more than 25%. Forms L-glutamate from L-glutamine and 2-oxoglutarate. Represents an alternative pathway to L-glutamate dehydrogenase for the biosynthesis of L-glutamate. Participates with glutamine synthetase in ammonia assimilation processes. The enzyme is specific for NADH, L-glutamine and 2-oxoglutarate. The sequence is that of Glutamate synthase [NADH] (glt1) from Schizosaccharomyces pombe (strain 972 / ATCC 24843) (Fission yeast).